The chain runs to 546 residues: CTP synthase (546 aa).

The amidoligase domain stretch occupies residues 1-266 (MTTNYIFVTG…DDLVCARFGI (266 aa)). Position 14 (serine 14) interacts with CTP. Serine 14 contributes to the UTP binding site. Residues 15 to 20 (SLGKGI) and aspartate 72 contribute to the ATP site. 2 residues coordinate Mg(2+): aspartate 72 and glutamate 140. CTP is bound by residues 147–149 (DIE), 187–192 (KTKPTQ), and lysine 223. UTP-binding positions include 187–192 (KTKPTQ) and lysine 223. 239 to 241 (KDV) is a binding site for ATP. The Glutamine amidotransferase type-1 domain maps to 291 to 542 (TIGMVGKYIE…VKAAGQNARG (252 aa)). Glycine 352 contacts L-glutamine. The Nucleophile; for glutamine hydrolysis role is filled by cysteine 379. Residues 380–383 (LGMQ), glutamate 403, and arginine 470 contribute to the L-glutamine site. Catalysis depends on residues histidine 515 and glutamate 517.

Belongs to the CTP synthase family. Homotetramer.

It carries out the reaction UTP + L-glutamine + ATP + H2O = CTP + L-glutamate + ADP + phosphate + 2 H(+). It catalyses the reaction L-glutamine + H2O = L-glutamate + NH4(+). The enzyme catalyses UTP + NH4(+) + ATP = CTP + ADP + phosphate + 2 H(+). Its pathway is pyrimidine metabolism; CTP biosynthesis via de novo pathway; CTP from UDP: step 2/2. Its activity is regulated as follows. Allosterically activated by GTP, when glutamine is the substrate; GTP has no effect on the reaction when ammonia is the substrate. The allosteric effector GTP functions by stabilizing the protein conformation that binds the tetrahedral intermediate(s) formed during glutamine hydrolysis. Inhibited by the product CTP, via allosteric rather than competitive inhibition. In terms of biological role, catalyzes the ATP-dependent amination of UTP to CTP with either L-glutamine or ammonia as the source of nitrogen. Regulates intracellular CTP levels through interactions with the four ribonucleotide triphosphates. The protein is CTP synthase of Vibrio campbellii (strain ATCC BAA-1116).